We begin with the raw amino-acid sequence, 407 residues long: 1-deoxy-D-xylulose 5-phosphate reductoisomerase (407 aa).

T27, G28, S29, I30, A53, R54, N55, and N140 together coordinate NADPH. K141 is a 1-deoxy-D-xylulose 5-phosphate binding site. E142 lines the NADPH pocket. A Mn(2+)-binding site is contributed by D166. 4 residues coordinate 1-deoxy-D-xylulose 5-phosphate: S167, E168, S192, and H215. Mn(2+) is bound at residue E168. G221 is a binding site for NADPH. Residues S228, N233, K234, and E237 each contribute to the 1-deoxy-D-xylulose 5-phosphate site. E237 is a Mn(2+) binding site.

Belongs to the DXR family. It depends on Mg(2+) as a cofactor. Mn(2+) serves as cofactor.

It carries out the reaction 2-C-methyl-D-erythritol 4-phosphate + NADP(+) = 1-deoxy-D-xylulose 5-phosphate + NADPH + H(+). It participates in isoprenoid biosynthesis; isopentenyl diphosphate biosynthesis via DXP pathway; isopentenyl diphosphate from 1-deoxy-D-xylulose 5-phosphate: step 1/6. Its function is as follows. Catalyzes the NADPH-dependent rearrangement and reduction of 1-deoxy-D-xylulose-5-phosphate (DXP) to 2-C-methyl-D-erythritol 4-phosphate (MEP). The protein is 1-deoxy-D-xylulose 5-phosphate reductoisomerase of Oleidesulfovibrio alaskensis (strain ATCC BAA-1058 / DSM 17464 / G20) (Desulfovibrio alaskensis).